The chain runs to 382 residues: Chaperone protein DnaJ (382 aa).

Residues 5–70 enclose the J domain; it reads DYYEVLGLKK…QKRAAYDQYG (66 aa). Residues 134-212 form a CR-type zinc finger; it reads GTTKDIQINT…CHGEGRVHKK (79 aa). Zn(2+) is bound by residues C147, C150, C164, C167, C186, C189, C200, and C203. CXXCXGXG motif repeat units lie at residues 147–154, 164–171, 186–193, and 200–207; these read CDSCGGSG, CPHCHGSG, CPSCHGSG, and CRSCHGEG.

The protein belongs to the DnaJ family. As to quaternary structure, homodimer. The cofactor is Zn(2+).

The protein resides in the cytoplasm. Participates actively in the response to hyperosmotic and heat shock by preventing the aggregation of stress-denatured proteins and by disaggregating proteins, also in an autonomous, DnaK-independent fashion. Unfolded proteins bind initially to DnaJ; upon interaction with the DnaJ-bound protein, DnaK hydrolyzes its bound ATP, resulting in the formation of a stable complex. GrpE releases ADP from DnaK; ATP binding to DnaK triggers the release of the substrate protein, thus completing the reaction cycle. Several rounds of ATP-dependent interactions between DnaJ, DnaK and GrpE are required for fully efficient folding. Also involved, together with DnaK and GrpE, in the DNA replication of plasmids through activation of initiation proteins. This chain is Chaperone protein DnaJ, found in Haemophilus influenzae (strain PittGG).